The primary structure comprises 103 residues: Heme-copper oxidase subunit 4 (103 aa).

3 helical membrane passes run 20–40 (VWIV…EGIA), 42–62 (NPFV…ALFF), and 75–95 (ITVS…TSVL).

It is found in the cell membrane. The sequence is that of Heme-copper oxidase subunit 4 (aoxC) from Aeropyrum pernix (strain ATCC 700893 / DSM 11879 / JCM 9820 / NBRC 100138 / K1).